A 105-amino-acid polypeptide reads, in one-letter code: Iron-sulfur cluster assembly protein CyaY (105 aa).

Belongs to the frataxin family.

Its function is as follows. Involved in iron-sulfur (Fe-S) cluster assembly. May act as a regulator of Fe-S biogenesis. This chain is Iron-sulfur cluster assembly protein CyaY, found in Paraburkholderia xenovorans (strain LB400).